The sequence spans 517 residues: Maturase K (517 aa).

This sequence belongs to the intron maturase 2 family. MatK subfamily.

It localises to the plastid. Its subcellular location is the chloroplast. Functionally, usually encoded in the trnK tRNA gene intron. Probably assists in splicing its own and other chloroplast group II introns. This Trillium maculatum (Spotted wakerobin) protein is Maturase K.